A 392-amino-acid chain; its full sequence is THO complex subunit MFT1 (392 aa).

Acidic residues-rich tracts occupy residues 258–271 (DNIDEDYESDEDEE) and 290–330 (NVDE…EVDG). The tract at residues 258-392 (DNIDEDYESD…SASSSVEEVK (135 aa)) is disordered. Phosphoserine is present on Ser266. Positions 331 to 344 (ESSQQEDNSRQGNN) are enriched in polar residues. Over residues 345-367 (EETDKETGVIEEPDAVNDAEEAD) the composition is skewed to acidic residues. Positions 377–392 (GTTSDFSASSSVEEVK) are enriched in polar residues.

As to quaternary structure, component of the THO complex, which is composed of HPR1, MFT1, THO2 and THP2. Together with SUB2, TEX1 and YRA1, THO forms the transcription/export (TREX) complex. THO associates with DNA and RNA in vitro.

The protein localises to the nucleus. Component the THO subcomplex of the TREX complex, which operates in coupling transcription elongation to mRNA export. The THO complex is recruited to transcribed genes and moves along the gene with the elongating polymerase during transcription. THO is important for stabilizing nascent RNA in the RNA polymerase II elongation complex by preventing formation of DNA:RNA hybrids behind the elongating polymerase. It functions in cotranscriptional formation of an export-competent messenger ribonucleoprotein particle (mRNP) by facilitating the loading of ATP-dependent RNA helicase SUB2 and the mRNA export factor YRA1 along the nascent mRNA. The polypeptide is THO complex subunit MFT1 (MFT1) (Saccharomyces cerevisiae (strain ATCC 204508 / S288c) (Baker's yeast)).